Reading from the N-terminus, the 214-residue chain is Glutathione S-transferase F11 (214 aa).

Residues 2–82 (VVKVYGQIKA…YYATKYADQG (81 aa)) form the GST N-terminal domain. Glutathione contacts are provided by residues 11–12 (AA), 40–41 (QK), 53–54 (QV), and 66–67 (ES). In terms of domain architecture, GST C-terminal spans 89–214 (TLEGRAIVDQ…WKKLMELAAY (126 aa)).

This sequence belongs to the GST superfamily. Phi family.

It localises to the cytoplasm. The protein resides in the cytosol. The catalysed reaction is RX + glutathione = an S-substituted glutathione + a halide anion + H(+). May be involved in the conjugation of reduced glutathione to a wide number of exogenous and endogenous hydrophobic electrophiles and have a detoxification role against certain herbicides. This Arabidopsis thaliana (Mouse-ear cress) protein is Glutathione S-transferase F11.